The primary structure comprises 523 residues: Ubiquilin (523 aa).

One can recognise a Ubiquitin-like domain in the interval 2–77 (VKINIKSSTD…VHLVKGAAPP (76 aa)). A disordered region spans residues 70–99 (LVKGAAPPPPPPVEQQVPTPSNTQPQGIPG). STI1 domains lie at 100–135 (VPQN…FRDM) and 139–178 (NPEM…MREM). The segment covering 215 to 227 (NQQAASQNQTNSN) has biased composition (low complexity). Residues 215 to 325 (NQQAASQNQT…ASMFGGGGGG (111 aa)) are disordered. A compositionally biased stretch (polar residues) spans 228 to 241 (PIQTNTDANPNSQP). Residues 245 to 278 (PWSTNSSSTSSNPTSSSPSSRPTTGSSTNTGASN) are compositionally biased toward low complexity. Over residues 285–296 (SGGGGGMGGGTN) the composition is skewed to gly residues. Residues 297 to 310 (NTGTNNTGSTNNTG) are compositionally biased toward low complexity. STI1 domains lie at 339 to 380 (DPER…RQMM) and 383 to 415 (NPQL…QQAM). The region spanning 480–523 (PPEQRFRLQLEQLEELGFVDRAANISALTSTNGNINLAIDRLLR) is the UBA domain.

Functionally, stable protein which acts as an antagonist of nosA by repressing cellular differentiation after the tight-aggregate stage, when cells differentiate into two precursor cell types, prespore and prestalk cells, prior to the formation of fruiting bodies. The polypeptide is Ubiquilin (ubqln) (Dictyostelium discoideum (Social amoeba)).